The chain runs to 269 residues: MKNNYTSLKSPLDEEDELKTDHEIDLEKGPLPEYDSEEESTLPPYSDHALVNNPPNTHRENHSYGTTDNSSPLLIILLISFTSIILFNAPEVCYLKYKDAFFKNYGAAEWTLFGFWCLVCTLALIFLTYFYETWTKAVKVTVISLAKCVKVTAIFLAQCVKACGKGIKHFLKKWENMPMAFSEVFLFNILVGSPRMNLRYIFGDRWGLKCSLADHIIFVVLSILVFIAETVKPGSIRVNLIRKMGYEAKQQVNEYTAVPLREMNSESEA.

A disordered region spans residues 1 to 65 (MKNNYTSLKS…NTHRENHSYG (65 aa)). Over residues 19-30 (KTDHEIDLEKGP) the composition is skewed to basic and acidic residues. 3 consecutive transmembrane segments (helical) span residues 73 to 95 (LLIILLISFTSIILFNAPEVCYL), 110 to 132 (WTLFGFWCLVCTLALIFLTYFYE), and 206 to 228 (WGLKCSLADHIIFVVLSILVFIA).

Belongs to the WTF family. In terms of assembly, homomer. Interacts with other proteins that exhibit high sequence similarity.

It is found in the spore membrane. It localises to the vacuole membrane. In terms of biological role, acts as a suppressor component of the dual wtf meiotic drive system, and can suppress but not confer meiotic drive by compatible poisons. Wtf meiotic drive systems promote unequal transmission of alleles from the parental zygote to progeny spores by encoding a poison and an antidote from the same locus; the poison is trans-acting and forms toxic aggregates in all spores within an ascus, wherease the antidote is spore-specific and targets aggregates for degradation by the vacuole. Meiotic drive by wtf systems therefore lead to poisoning of all progeny that do not inherit the dual poison/antidote allele, or express a compatible antidote. In Schizosaccharomyces pombe (strain 972 / ATCC 24843) (Fission yeast), this protein is Meiotic drive suppressor wtf5.